The sequence spans 453 residues: Probable exopolygalacturonase B (453 aa).

An N-terminal signal peptide occupies residues 1 to 16 (MKFLALAALFASTVSS). N-linked (GlcNAc...) asparagine glycosylation is found at asparagine 185 and asparagine 225. Aspartate 255 serves as the catalytic Proton donor. Cysteine 257 and cysteine 274 are joined by a disulfide. N-linked (GlcNAc...) asparagine glycans are attached at residues asparagine 263 and asparagine 275. Histidine 278 is an active-site residue. 2 PbH1 repeats span residues 295 to 316 (IENV…RLKA) and 327 to 348 (INNV…VLDQ). Asparagine 302, asparagine 329, asparagine 354, and asparagine 366 each carry an N-linked (GlcNAc...) asparagine glycan. One copy of the PbH1 3 repeat lies at 362–405 (PSRVNFTNIVFENIYGTSSGKHGKVVADLTCSPNAVCSGIRLKN). Cysteine 392 and cysteine 398 are oxidised to a cystine. Asparagine 436 carries N-linked (GlcNAc...) asparagine glycosylation.

The protein belongs to the glycosyl hydrolase 28 family.

It localises to the secreted. It carries out the reaction [(1-&gt;4)-alpha-D-galacturonosyl](n) + H2O = alpha-D-galacturonate + [(1-&gt;4)-alpha-D-galacturonosyl](n-1). In terms of biological role, specific in hydrolyzing the terminal glycosidic bond of polygalacturonic acid and oligogalacturonates. The chain is Probable exopolygalacturonase B (pgxB) from Neosartorya fischeri (strain ATCC 1020 / DSM 3700 / CBS 544.65 / FGSC A1164 / JCM 1740 / NRRL 181 / WB 181) (Aspergillus fischerianus).